A 646-amino-acid polypeptide reads, in one-letter code: Lipoteichoic acid synthase (646 aa).

Residues 1 to 7 (MSLPKKK) lie on the Cytoplasmic side of the membrane. Residues 8-28 (IGIFAFFLLTVFTITLKTYFS) traverse the membrane as a helical segment. Over 29-43 (YYVDFSLGVKGLVQN) the chain is Extracellular. The helical transmembrane segment at 44–64 (LILIMNPYSLIALVLSVFLFF) threads the bilayer. Residues 65-68 (KGKK) are Cytoplasmic-facing. Residues 69-89 (AFWFIFIGGFLLTFLLYANVV) form a helical membrane-spanning segment. Residues 90–119 (YFRFFSDFLTFSTLNQAGNVESMGGAVSAS) lie on the Extracellular side of the membrane. Residues 120–140 (FKWYDFVYFIDTIIYLAILIF) form a helical membrane-spanning segment. Topologically, residues 141 to 153 (KRKWLDNRAFSKK) are cytoplasmic. The helical transmembrane segment at 154-174 (FVPVVMATSVALFFLNLAFAE) threads the bilayer. Residues 175–646 (TDRPELLTRT…KSGPKGNEKK (472 aa)) lie on the Extracellular side of the membrane. The Mn(2+) site is built by glutamate 255 and threonine 300. The active site involves threonine 300. Position 416 (histidine 416) interacts with substrate. Mn(2+) contacts are provided by aspartate 475 and histidine 476.

Belongs to the LTA synthase family. In terms of processing, proteolytically cleaved.

Its subcellular location is the cell membrane. The protein localises to the secreted. It functions in the pathway cell wall biogenesis; lipoteichoic acid biosynthesis. Catalyzes the polymerization of lipoteichoic acid (LTA) polyglycerol phosphate, a reaction that presumably uses phosphatidylglycerol (PG) as substrate. Is required for staphylococcal growth and cell division process. The protein is Lipoteichoic acid synthase (ltaS) of Staphylococcus epidermidis (strain ATCC 12228 / FDA PCI 1200).